Consider the following 373-residue polypeptide: Trifolitoxin-processing protein TfxB (373 aa).

To E.coli McbC which is involved in the processing of microcin B17 (MCCB17).

Its subcellular location is the cytoplasm. Functionally, the actions of the proteins TfxB, TfxD and TfxF are implicated in the processing of the inactive trifolitoxin (TfxA) precursor into the active peptide. The chain is Trifolitoxin-processing protein TfxB (tfxB) from Rhizobium leguminosarum bv. trifolii.